The sequence spans 331 residues: Phospho-N-acetylmuramoyl-pentapeptide-transferase (331 aa).

Helical transmembrane passes span I7–P27, T54–I74, L78–I98, L106–I126, I133–T153, I154–A174, I195–F215, A249–I269, and V311–S331.

Belongs to the glycosyltransferase 4 family. MraY subfamily. The cofactor is Mg(2+).

The protein localises to the cell membrane. It catalyses the reaction UDP-N-acetyl-alpha-D-muramoyl-L-alanyl-gamma-D-glutamyl-meso-2,6-diaminopimeloyl-D-alanyl-D-alanine + di-trans,octa-cis-undecaprenyl phosphate = di-trans,octa-cis-undecaprenyl diphospho-N-acetyl-alpha-D-muramoyl-L-alanyl-D-glutamyl-meso-2,6-diaminopimeloyl-D-alanyl-D-alanine + UMP. The protein operates within cell wall biogenesis; peptidoglycan biosynthesis. In terms of biological role, catalyzes the initial step of the lipid cycle reactions in the biosynthesis of the cell wall peptidoglycan: transfers peptidoglycan precursor phospho-MurNAc-pentapeptide from UDP-MurNAc-pentapeptide onto the lipid carrier undecaprenyl phosphate, yielding undecaprenyl-pyrophosphoryl-MurNAc-pentapeptide, known as lipid I. In Alkaliphilus metalliredigens (strain QYMF), this protein is Phospho-N-acetylmuramoyl-pentapeptide-transferase.